Here is a 195-residue protein sequence, read N- to C-terminus: dCTP deaminase (195 aa).

DCTP contacts are provided by residues 109 to 114 (RSSLAR), aspartate 127, 135 to 137 (TLE), tyrosine 170, lysine 177, and glutamine 181. Glutamate 137 functions as the Proton donor/acceptor in the catalytic mechanism.

It belongs to the dCTP deaminase family. In terms of assembly, homotrimer.

The enzyme catalyses dCTP + H2O + H(+) = dUTP + NH4(+). Its pathway is pyrimidine metabolism; dUMP biosynthesis; dUMP from dCTP (dUTP route): step 1/2. In terms of biological role, catalyzes the deamination of dCTP to dUTP. This is dCTP deaminase from Rhodospirillum rubrum (strain ATCC 11170 / ATH 1.1.1 / DSM 467 / LMG 4362 / NCIMB 8255 / S1).